The sequence spans 565 residues: Periplasmic trehalase (565 aa).

The first 30 residues, 1–30, serve as a signal peptide directing secretion; that stretch reads MKSPAPSRPQKMALIPACIFLCFAALSVQA. Substrate is bound by residues arginine 152, 159-160, asparagine 196, 205-207, 277-279, and glycine 310; these read WD, RSQ, and RPE. Active-site proton donor/acceptor residues include aspartate 312 and glutamate 496. Glutamate 511 contributes to the substrate binding site. Residues 539–565 are disordered; that stretch reads CDNVPATRPLSESTTQPVKPKEAEPTL.

The protein belongs to the glycosyl hydrolase 37 family. In terms of assembly, monomer.

It is found in the periplasm. It carries out the reaction alpha,alpha-trehalose + H2O = alpha-D-glucose + beta-D-glucose. Provides the cells with the ability to utilize trehalose at high osmolarity by splitting it into glucose molecules that can subsequently be taken up by the phosphotransferase-mediated uptake system. The polypeptide is Periplasmic trehalase (Shigella dysenteriae serotype 1 (strain Sd197)).